Consider the following 339-residue polypeptide: D-alanine--D-alanine ligase (339 aa).

An ATP-grasp domain is found at 115-327 (KHIFRSLGID…FNELVKIIIE (213 aa)). 142–211 (KIDYPYVLKP…EEYIPGIELH (70 aa)) provides a ligand contact to ATP. Residues D279, E293, and N295 each contribute to the Mg(2+) site.

This sequence belongs to the D-alanine--D-alanine ligase family. It depends on Mg(2+) as a cofactor. Mn(2+) serves as cofactor.

Its subcellular location is the cytoplasm. It carries out the reaction 2 D-alanine + ATP = D-alanyl-D-alanine + ADP + phosphate + H(+). Its pathway is cell wall biogenesis; peptidoglycan biosynthesis. In terms of biological role, cell wall formation. The polypeptide is D-alanine--D-alanine ligase (Wolbachia sp. subsp. Brugia malayi (strain TRS)).